We begin with the raw amino-acid sequence, 301 residues long: Inosose dehydratase (301 aa).

Belongs to the IolE/MocC family. Glutathione is required as a cofactor. The cofactor is Co(2+). Requires Mn(2+) as cofactor.

It carries out the reaction scyllo-inosose = 3D-3,5/4-trihydroxycyclohexane-1,2-dione + H2O. Functionally, catalyzes the dehydration of inosose (2-keto-myo-inositol, 2KMI or 2,4,6/3,5-pentahydroxycyclohexanone) to 3D-(3,5/4)-trihydroxycyclohexane-1,2-dione (D-2,3-diketo-4-deoxy-epi-inositol). This Salmonella typhimurium (strain LT2 / SGSC1412 / ATCC 700720) protein is Inosose dehydratase.